The sequence spans 158 residues: MNQIPMTLRGAEQLREELNYLKNVRRPEIIRNIAEAREYGDLKENAEYHAAREQQGFCEGRIQEIESKLSHAQIIDVTKLFPSGKVVFGVTVSVQNLNINEEQTYRIVGDDEANFKHNLISISSPIARGLIGKKKGDIVLIKTPRGEVKYQILKIEYL.

Belongs to the GreA/GreB family.

Necessary for efficient RNA polymerase transcription elongation past template-encoded arresting sites. The arresting sites in DNA have the property of trapping a certain fraction of elongating RNA polymerases that pass through, resulting in locked ternary complexes. Cleavage of the nascent transcript by cleavage factors such as GreA or GreB allows the resumption of elongation from the new 3'terminus. GreA releases sequences of 2 to 3 nucleotides. The chain is Transcription elongation factor GreA from Baumannia cicadellinicola subsp. Homalodisca coagulata.